The chain runs to 55 residues: Large ribosomal subunit protein bL33 (55 aa).

The protein belongs to the bacterial ribosomal protein bL33 family.

This is Large ribosomal subunit protein bL33 from Rhodopseudomonas palustris (strain BisB5).